The chain runs to 210 residues: Large ribosomal subunit protein uL4 (210 aa).

Polar residues predominate over residues 44–54; that stretch reads KRQGTASTLTR. A disordered region spans residues 44–85; the sequence is KRQGTASTLTRSEVRGGGRKPYKQKGTGRARQGSIRTPLRPG. Residues 60-71 are compositionally biased toward basic residues; sequence GGRKPYKQKGTG.

Belongs to the universal ribosomal protein uL4 family. Part of the 50S ribosomal subunit.

Its function is as follows. One of the primary rRNA binding proteins, this protein initially binds near the 5'-end of the 23S rRNA. It is important during the early stages of 50S assembly. It makes multiple contacts with different domains of the 23S rRNA in the assembled 50S subunit and ribosome. Forms part of the polypeptide exit tunnel. The polypeptide is Large ribosomal subunit protein uL4 (Prochlorococcus marinus (strain MIT 9301)).